A 1491-amino-acid polypeptide reads, in one-letter code: Neurexin-1a (1491 aa).

The first 27 residues, 1-27 (MSFSMRNGAHLIWIGLLVCCLVDMGAS), serve as a signal peptide directing secretion. The Laminin G-like 1 domain maps to 28-208 (MEFTGAEGQW…SDICEADHIC (181 aa)). At 28 to 1415 (MEFTGAEGQW…EVIRESSSTT (1388 aa)) the chain is on the extracellular side. The EGF-like 1 domain maps to 198-236 (NSDICEADHICLNGGVCSIVNDEPICDCSETGFQGKDCS). 3 disulfides stabilise this stretch: C202-C214, C208-C223, and C225-C235. Laminin G-like domains lie at 263 to 460 (MATF…AFKC) and 467 to 661 (DPVT…KPSC). Ca(2+) contacts are provided by D309, L326, and M394. Disulfide bonds link C424-C460, C632-C661, C669-C680, C674-C689, and C691-C701. Residues 665–702 (PPKQCLSNPCLNSGTCREGWNRYVCDCSGTGYLGRSCE) enclose the EGF-like 2 domain. Laminin G-like domains are found at residues 707–880 (ILSY…IDYC) and 894–1069 (DPVT…ERGC). Disulfide bonds link C1041–C1069, C1076–C1087, C1081–C1096, and C1098–C1108. The EGF-like 3 domain maps to 1072-1109 (PSTTCQEDSCSNQGVCLQQWEGFSCDCSMTSYGGPLCN). The region spanning 1113–1314 (TTYIFGRDGG…DPNVRVEGSA (202 aa)) is the Laminin G-like 6 domain. Positions 1318-1408 (GDMPSSSITP…AKGYPSPEVI (91 aa)) are disordered. The span at 1322 to 1353 (SSSITPQSSVSAAGNRSETSPSITDITTTTAS) shows a compositional bias: low complexity. The span at 1354–1364 (NRQGKQTTTPQ) shows a compositional bias: polar residues. The helical transmembrane segment at 1416 to 1436 (GMVVGIVAAAALCILILLYAM) threads the bilayer. Residues 1437–1491 (YKYRNRDEGSYHVDESRNYISNSATQPNGAAVKEKPIGVPKNKKDKKNKDKEYYV) lie on the Cytoplasmic side of the membrane. Residues 1457 to 1491 (SNSATQPNGAAVKEKPIGVPKNKKDKKNKDKEYYV) are disordered.

Belongs to the neurexin family.

Its subcellular location is the membrane. Neuronal cell surface protein that may be involved in cell recognition and cell adhesion. The sequence is that of Neurexin-1a (nrxn1a) from Danio rerio (Zebrafish).